The sequence spans 42 residues: Crotamine-IV-2 (42 aa).

Disulfide bonds link cysteine 4/cysteine 37, cysteine 11/cysteine 31, and cysteine 19/cysteine 38.

Belongs to the crotamine-myotoxin family. Monomer. Expressed by the venom gland.

The protein localises to the secreted. Cationic peptide that possesses multiple functions. It acts as a cell-penetrating peptide (CPP), and as a potent voltage-gated potassium channel (Kv) inhibitor. It exhibits antimicrobial activities, and hind limb paralysis. It also induces potent blockade of neuromuscular transmission in young chicken biventer cervicis preparation and potent myotoxic effect. In vivo, induces myonecrosis, upon intramuscular or subcutaneous injections into mice. This is Crotamine-IV-2 from Crotalus durissus cumanensis (South American rattlesnake).